Consider the following 359-residue polypeptide: Guanine nucleotide-binding protein-like alpha-11 subunit (359 aa).

Gly-2 is lipidated: N-myristoyl glycine. Residues 29-359 form the G-alpha domain; it reads KLIKILMMGN…YVKKILEDTI (331 aa). A G1 motif region spans residues 32–45; sequence KILMMGNENSAKST. Ser-44 is a binding site for Mg(2+). Positions 176–185 are G2 motif; the sequence is DIIRCSKNNQ. GTP contacts are provided by residues 178–185, 204–208, and 281–284; these read IRCSKNNQ, DTGNQ, and NKKE. The tract at residues 200-209 is G3 motif; the sequence is FVFVDTGNQK. The segment at 277-284 is G4 motif; the sequence is IVLFNKKE. The segment at 337–342 is G5 motif; that stretch reads FNSSDT.

The protein belongs to the G-alpha family.

This is Guanine nucleotide-binding protein-like alpha-11 subunit (gpaK) from Dictyostelium discoideum (Social amoeba).